We begin with the raw amino-acid sequence, 331 residues long: Adenosine deaminase (331 aa).

Positions 12 and 14 each coordinate Zn(2+). The substrate site is built by His-14 and Asp-16. Residue His-197 coordinates Zn(2+). Glu-200 (proton donor) is an active-site residue. Asp-278 is a binding site for Zn(2+).

The protein belongs to the metallo-dependent hydrolases superfamily. Adenosine and AMP deaminases family. Adenosine deaminase subfamily. Requires Zn(2+) as cofactor.

It catalyses the reaction adenosine + H2O + H(+) = inosine + NH4(+). The enzyme catalyses 2'-deoxyadenosine + H2O + H(+) = 2'-deoxyinosine + NH4(+). Catalyzes the hydrolytic deamination of adenosine and 2-deoxyadenosine. In Shewanella halifaxensis (strain HAW-EB4), this protein is Adenosine deaminase.